Reading from the N-terminus, the 306-residue chain is Ribosomal RNA small subunit methyltransferase H (306 aa).

S-adenosyl-L-methionine is bound by residues 36–38 (GGH), Asp-56, Phe-80, Asp-97, and Gln-104. The interval 280–306 (ASEEEVAGNPRSRSAVMRVAERTGEAA) is disordered.

It belongs to the methyltransferase superfamily. RsmH family.

The protein resides in the cytoplasm. It carries out the reaction cytidine(1402) in 16S rRNA + S-adenosyl-L-methionine = N(4)-methylcytidine(1402) in 16S rRNA + S-adenosyl-L-homocysteine + H(+). Its function is as follows. Specifically methylates the N4 position of cytidine in position 1402 (C1402) of 16S rRNA. The sequence is that of Ribosomal RNA small subunit methyltransferase H from Polaromonas naphthalenivorans (strain CJ2).